We begin with the raw amino-acid sequence, 671 residues long: DNA ligase (671 aa).

NAD(+)-binding positions include 32–36, 81–82, and E113; these read DAEYD and SL. K115 (N6-AMP-lysine intermediate) is an active-site residue. 4 residues coordinate NAD(+): R136, E173, K290, and K314. Zn(2+) contacts are provided by C408, C411, C426, and C432. One can recognise a BRCT domain in the interval 593–671; the sequence is EIDSPFAGKT…EAEMLRLLGS (79 aa).

Belongs to the NAD-dependent DNA ligase family. LigA subfamily. The cofactor is Mg(2+). It depends on Mn(2+) as a cofactor.

The enzyme catalyses NAD(+) + (deoxyribonucleotide)n-3'-hydroxyl + 5'-phospho-(deoxyribonucleotide)m = (deoxyribonucleotide)n+m + AMP + beta-nicotinamide D-nucleotide.. Functionally, DNA ligase that catalyzes the formation of phosphodiester linkages between 5'-phosphoryl and 3'-hydroxyl groups in double-stranded DNA using NAD as a coenzyme and as the energy source for the reaction. It is essential for DNA replication and repair of damaged DNA. This chain is DNA ligase, found in Shigella dysenteriae serotype 1 (strain Sd197).